The following is a 372-amino-acid chain: Tyrosine--tRNA ligase (372 aa).

Residues Tyr37, Tyr169, Gln173, Asp176, and Gln191 each coordinate L-tyrosine. The 'KMSKS' region signature appears at 246-250; that stretch reads KMSKS. Residue Lys249 participates in ATP binding.

Belongs to the class-I aminoacyl-tRNA synthetase family. TyrS type 4 subfamily. Homodimer.

Its subcellular location is the cytoplasm. It catalyses the reaction tRNA(Tyr) + L-tyrosine + ATP = L-tyrosyl-tRNA(Tyr) + AMP + diphosphate + H(+). In terms of biological role, catalyzes the attachment of tyrosine to tRNA(Tyr) in a two-step reaction: tyrosine is first activated by ATP to form Tyr-AMP and then transferred to the acceptor end of tRNA(Tyr). The protein is Tyrosine--tRNA ligase of Pyrobaculum calidifontis (strain DSM 21063 / JCM 11548 / VA1).